The following is a 149-amino-acid chain: Protein-export protein SecB (149 aa).

It belongs to the SecB family. In terms of assembly, homotetramer, a dimer of dimers. One homotetramer interacts with 1 SecA dimer.

The protein localises to the cytoplasm. In terms of biological role, one of the proteins required for the normal export of preproteins out of the cell cytoplasm. It is a molecular chaperone that binds to a subset of precursor proteins, maintaining them in a translocation-competent state. It also specifically binds to its receptor SecA. In Hydrogenovibrio crunogenus (strain DSM 25203 / XCL-2) (Thiomicrospira crunogena), this protein is Protein-export protein SecB.